The sequence spans 360 residues: Blue-light-activated histidine kinase 1 (360 aa).

A PAS domain is found at 38–109 (LFLETTQQTR…KLREGIAAER (72 aa)). Residue Cys85 is modified to S-4a-FMN cysteine. A PAC domain is found at 109-163 (RYTVVDLLNYRKDGIPFWNAVHVGPIYGEDGTLQYFYGSQWDITDIVAERRKAET). At His173 the chain carries Phosphohistidine; by autocatalysis. The tract at residues 260–303 (RSVTALGLALHELATNAVKYGALSVDAGRVEISWSREDGDVTLV) is HWE histidine kinase domain.

In terms of processing, FMN binds covalently to cysteine after exposure to blue light and this bond is spontaneously broken in the dark.

It catalyses the reaction ATP + protein L-histidine = ADP + protein N-phospho-L-histidine.. Photosensitive kinase that is involved in increased bacterial virulence upon exposure to light. This Erythrobacter litoralis (strain HTCC2594) protein is Blue-light-activated histidine kinase 1.